We begin with the raw amino-acid sequence, 445 residues long: RNA-binding protein asd-2 (445 aa).

The tract at residues 22–63 is disordered; sequence TVIPPPPNDSGHEFIGPSSGPPQVTITPSGVQSGSANGVSTS. Residues 42-63 are compositionally biased toward polar residues; it reads PPQVTITPSGVQSGSANGVSTS. The segment at 71–128 is qua1 domain; sequence EYLSQLLKDKKQLAAFPNVFHHLERLADEEINKVRVVLFQCEFSKESAPLPDAEGDST. In terms of domain architecture, KH spans 145-171; that stretch reads NFVGRILGPRGMTAKQLEQETGCKIMV. The qua2 domain; involved in RNA binding stretch occupies residues 230-253; it reads APEGEDDLKRKQLMELAIINGTYR.

In terms of assembly, interacts with sup-12; in the presence of RNA, but with weak affinity in the absence of RNA. In terms of tissue distribution, isoform b: Expressed in the hypodermis and pharyngeal muscles. Isoform c: Expressed in body wall muscles and phayngeal muscles.

It localises to the nucleus. Its function is as follows. RNA-binding protein that binds to the 5'-NACUAAY-N(1,20)-UAAY-3' consensus sequence in pre-mRNA introns to promote alternative splicing. Required for mutually exclusive alternative splicing where it modulates the switch between mutually exclusive exons during pre-mRNA maturation. Involved in muscle-specific gene expression regulating the alternative splicing of genes such as let-2 and unc-60 to ensure that their respective isoforms are expressed in muscle. Promotes the removal of intron 10 from let-2 pre-mRNA to allow for the exclusive expression of the muscle-specific let-2 isoform (as opposed to the non-muscle-specific isoform expressed in embryos) in body wall muscles during late larval and adult stages of development. Binds cooperatively with RNA-binding protein sup-12 to intron 1A of the unc-60 pre-mRNA to promote alternative splicing and expression of the muscle specific isoform of unc-60. This Caenorhabditis elegans protein is RNA-binding protein asd-2.